The primary structure comprises 312 residues: tRNA uridine(34) hydroxylase (312 aa).

The region spanning 145–235 is the Rhodanese domain; the sequence is ENKNSVLVDM…GIIKYVRDAR (91 aa). Cys-199 serves as the catalytic Cysteine persulfide intermediate.

The protein belongs to the TrhO family.

It catalyses the reaction uridine(34) in tRNA + AH2 + O2 = 5-hydroxyuridine(34) in tRNA + A + H2O. Catalyzes oxygen-dependent 5-hydroxyuridine (ho5U) modification at position 34 in tRNAs. This chain is tRNA uridine(34) hydroxylase, found in Buchnera aphidicola subsp. Baizongia pistaciae (strain Bp).